A 239-amino-acid chain; its full sequence is ATP synthase subunit a (239 aa).

5 helical membrane-spanning segments follow: residues 13 to 33 (IWFD…VFAF), 75 to 95 (FHLM…LGLV), 113 to 133 (DPIV…FFGM), 174 to 194 (GNIF…ASVG), and 208 to 230 (WVAF…SMVY).

It belongs to the ATPase A chain family. F-type ATPases have 2 components, CF(1) - the catalytic core - and CF(0) - the membrane proton channel. CF(1) has five subunits: alpha(3), beta(3), gamma(1), delta(1), epsilon(1). CF(0) has three main subunits: a(1), b(2) and c(9-12). The alpha and beta chains form an alternating ring which encloses part of the gamma chain. CF(1) is attached to CF(0) by a central stalk formed by the gamma and epsilon chains, while a peripheral stalk is formed by the delta and b chains.

The protein localises to the cell membrane. Its function is as follows. Key component of the proton channel; it plays a direct role in the translocation of protons across the membrane. This chain is ATP synthase subunit a, found in Enterococcus faecalis (strain ATCC 700802 / V583).